We begin with the raw amino-acid sequence, 286 residues long: MASPGVLEESSSGEACSGGCPEQWDEKTEEELQGQFEQAAKHVQNVASVASTEQLLFLYARYKQVKVGRCNTPKPGFFDYEGKKKWEAWKALGDYSCQQAMNEYIETVKKLDPDWSPQALEEPHKEPKTTFGGPVVSCLYKVQETLREEDKDIFDYCRENNISRVSHALSTGAIDVNVADDEGRCLLHWACDRGHTQLVSVLLFHNAHINMQDSEGQTPLHYASACEFPDIVDLLLDHGADPSLVDNDGFQPHEVTDSKNIAAMLQQHASYGEHNKPASLLLEMPQ.

Residues 1 to 24 form a disordered region; it reads MASPGVLEESSSGEACSGGCPEQW. Low complexity predominate over residues 8–22; it reads EESSSGEACSGGCPE. An ACB domain is found at 32–117; it reads LQGQFEQAAK…VKKLDPDWSP (86 aa). Residues 59 to 63, Lys85, and Tyr104 each bind an acyl-CoA; that span reads YARYK. ANK repeat units lie at residues 182–211 and 215–244; these read EGRC…HINM and EGQT…DPSL.

It is found in the cytoplasm. It localises to the nucleus. Binds long-chain acyl-coenzyme A molecules with a strong preference for unsaturated C18:1-CoA. Does not bind fatty acids. Plays a role in protein N-myristoylation. This is Acyl-CoA-binding domain-containing protein 6 (acbd6) from Xenopus tropicalis (Western clawed frog).